Reading from the N-terminus, the 128-residue chain is Glycine cleavage system H protein (128 aa).

Residues 23–105 (IGIVGITWFA…YGEGWILKLE (83 aa)) enclose the Lipoyl-binding domain. N6-lipoyllysine is present on Lys-64.

This sequence belongs to the GcvH family. The glycine cleavage system is composed of four proteins: P, T, L and H. (R)-lipoate serves as cofactor.

The glycine cleavage system catalyzes the degradation of glycine. The H protein shuttles the methylamine group of glycine from the P protein to the T protein. This Symbiobacterium thermophilum (strain DSM 24528 / JCM 14929 / IAM 14863 / T) protein is Glycine cleavage system H protein.